Reading from the N-terminus, the 232-residue chain is Putative homeobox protein NANOG2 (232 aa).

A compositionally biased stretch (basic and acidic residues) spans 1 to 10 (MDLPIEDSHD). The tract at residues 1 to 39 (MDLPIEDSHDSSTSPKGKQPTTAEKSATKKEDKVPVKKQ) is disordered. The segment covering 11 to 25 (SSTSPKGKQPTTAEK) has biased composition (polar residues). Positions 26 to 35 (SATKKEDKVP) are enriched in basic and acidic residues. 8 consecutive repeat copies span residues 123–127 (WSNQT), 128–132 (WNNSI), 133–137 (WSNET), 143–147 (WSNHS), 148–152 (WNTQT), 153–157 (WCTQS), 158–162 (WNNQA), and 163–167 (WNSPF). The 8 X repeats starting with a Trp in each unit stretch occupies residues 123–167 (WSNQTWNNSIWSNETQNIQSWSNHSWNTQTWCTQSWNNQAWNSPF). The interval 123–167 (WSNQTWNNSIWSNETQNIQSWSNHSWNTQTWCTQSWNNQAWNSPF) is sufficient for transactivation activity. The sufficient for strong transactivation activity stretch occupies residues 168–232 (YNCGEESLQS…YSTNMQPEDV (65 aa)).

This sequence belongs to the Nanog homeobox family.

The protein resides in the nucleus. Its function is as follows. Probable transcriptional regulator. This is Putative homeobox protein NANOG2 (NANOGP1) from Pan troglodytes (Chimpanzee).